The sequence spans 99 residues: L-rhamnose mutarotase (99 aa).

Tyr18 is a binding site for substrate. The active-site Proton donor is the His22. Substrate is bound by residues Tyr41 and Trp76–Trp77.

Belongs to the rhamnose mutarotase family. In terms of assembly, homodimer.

The protein resides in the cytoplasm. It carries out the reaction alpha-L-rhamnose = beta-L-rhamnose. It functions in the pathway carbohydrate metabolism; L-rhamnose metabolism. Involved in the anomeric conversion of L-rhamnose. This Shigella boydii serotype 18 (strain CDC 3083-94 / BS512) protein is L-rhamnose mutarotase.